A 333-amino-acid polypeptide reads, in one-letter code: uncharacterized protein (333 aa).

This is an uncharacterized protein from Escherichia coli (Bacteriophage T4).